We begin with the raw amino-acid sequence, 328 residues long: CCAAT/enhancer-binding protein beta (328 aa).

Asymmetric dimethylarginine; by CARM1 is present on Arg3. Residue Lys39 is modified to N6-methylated lysine. The segment at 165–274 is disordered; it reads DSCKGPRKEE…NIAVRKSRDK (110 aa). Low complexity predominate over residues 200–231; the sequence is SVPSGSSGNLSTSSSSSPPGTPNPSESSKSAA. Phosphothreonine; by RPS6KA1, CDK2 and MAPK is present on Thr220. The segment covering 248–264 has biased composition (basic and acidic residues); it reads KCVDKHSDEYKLRRERN. One can recognise a bZIP domain in the interval 254–317; that stretch reads SDEYKLRRER…STLRNLFKQL (64 aa). Residues 258–278 are basic motif; sequence KLRRERNNIAVRKSRDKAKMR. The interval 280–287 is leucine-zipper; the sequence is LETQHKVL.

This sequence belongs to the bZIP family. C/EBP subfamily. As to quaternary structure, binds DNA as a dimer. Interacts (not methylated) with MED23, MED26, SMARCA2, SMARCB1 and SMARCC1. Post-translationally, methylated. Methylation at Arg-3 by CARM1 and at Lys-39 by EHMT2, inhibit transactivation activity. Methylation is probably inhibited by phosphorylation at Thr-220. Specifically expressed in myelomoncytic cells.

The protein localises to the nucleus. Its function is as follows. Important transcriptional activator regulating the expression of genes involved in immune and inflammatory responses. Binds to regulatory regions of several acute-phase and cytokines genes and probably plays a role in the regulation of acute-phase reaction, inflammation and hemopoiesis. The consensus recognition site is 5'-T[TG]NNGNAA[TG]-3'. Functions in brown adipose tissue (BAT) differentiation. Regulates the transcriptional induction of peroxisome proliferator-activated receptor gamma (PPARG). Binds to the MGF and MIM-1 promoters and activates the transcription of these genes. Functionally, important transcription factor regulating the expression of genes involved in immune and inflammatory responses. Also plays a significant role in adipogenesis, as well as in the gluconeogenic pathway, liver regeneration, and hematopoiesis. The consensus recognition site is 5'-T[TG]NNGNAA[TG]-3'. Its functional capacity is governed by protein interactions and post-translational protein modifications. This is CCAAT/enhancer-binding protein beta (CEBPB) from Gallus gallus (Chicken).